We begin with the raw amino-acid sequence, 515 residues long: MASGILVNVKEEVTCPICLELLTEPLSLPCGHSFCQACITANHKESMLYKEEERSCPVCRISYQPENIQPNRHVANIVEKLREVKLSPEEGQKVDHCARHGEKLLLFCQEDSKVICWLCERSQEHRGHHTFLMEEVAQEYHVKLQTALEMLRQKQQEAEKLEADTREEKASWKIQIDYDKTNVSADFEQLREILDWEESNELQNLEKEEEDILKSLTKSETEMVQQTQYMRELISDLEHRLQGSMMELLQGVDGIIKRIENMTLKKPKTFHKNQRRVFRAPDLKGMLDMFRELTDVRRYWVDVTLAPNNISHAVIAEDKRQVSYQNPQIMYQAPGSLFGSLTNFNYYTGVRGSQSITSGKLTNFNYCTGVLGSQSITSGKHYWEVDVSKKSAWILGVCAGFQPDATYNIEQNENYQPKYGYWVIGLQEGDKYSVFQDGSSHTPFAPFIVPLSVIICPDRVGVFVDYEACTVSFFNITNHGFLIYKFSQCSFSKPVFPYLNPRKCTVPMTLCSPSS.

Position 2 is an N-acetylalanine (Ala2). An RING-type zinc finger spans residues 15-60 (CPICLELLTEPLSLPCGHSFCQACITANHKESMLYKEEERSCPVCR). Ser87 carries the phosphoserine modification. Residues 92–133 (QKVDHCARHGEKLLLFCQEDSKVICWLCERSQEHRGHHTFLM) form a B box-type zinc finger. Positions 97, 100, 119, and 125 each coordinate Zn(2+). The stretch at 137–225 (AQEYHVKLQT…LTKSETEMVQ (89 aa)) forms a coiled coil. The interval 187–200 (FEQLREILDWEESN) is required for interaction with GABARAP and for autophagy. The region spanning 283–515 (LKGMLDMFRE…VPMTLCSPSS (233 aa)) is the B30.2/SPRY domain.

The protein belongs to the TRIM/RBCC family. Can form homodimers and homotrimers. In addition to lower-order dimerization, also exhibits a higher-order multimerization and both low- and high-order multimerizations are essential for its restriction activity. Interacts with BTBD1 and BTBD2. Interacts with PSMC4, PSMC5, PSMD7 and HSPA8/HSC70. Interacts (via B30.2/SPRY domain) with HSPA1A/B. Interacts with PSMC2, MAP3K7/TAK1, TAB2 and TAB3. Interacts with SQSTM1. Interacts with TRIM6 and TRIM34. Interacts with ULK1 (phosphorylated form), GABARAP, GABARAPL1, GABARAPL2, MAP1LC3A, MAP1LC3C and BECN1. Degraded in a proteasome-independent fashion in the absence of viral infection but in a proteasome-dependent fashion following exposure to restriction sensitive virus. In terms of processing, autoubiquitinated in a RING finger- and UBE2D2-dependent manner. Monoubiquitinated by TRIM21. Deubiquitinated by Yersinia YopJ. Ubiquitination may not lead to proteasomal degradation.

The protein resides in the cytoplasm. Its subcellular location is the nucleus. It carries out the reaction S-ubiquitinyl-[E2 ubiquitin-conjugating enzyme]-L-cysteine + [acceptor protein]-L-lysine = [E2 ubiquitin-conjugating enzyme]-L-cysteine + N(6)-ubiquitinyl-[acceptor protein]-L-lysine.. It participates in protein modification; protein ubiquitination. Its function is as follows. Capsid-specific restriction factor that prevents infection from non-host-adapted retroviruses. Blocks viral replication early in the life cycle, after viral entry but before reverse transcription. In addition to acting as a capsid-specific restriction factor, also acts as a pattern recognition receptor that activates innate immune signaling in response to the retroviral capsid lattice. Binding to the viral capsid triggers its E3 ubiquitin ligase activity, and in concert with the heterodimeric ubiquitin conjugating enzyme complex UBE2V1-UBE2N (also known as UBC13-UEV1A complex) generates 'Lys-63'-linked polyubiquitin chains, which in turn are catalysts in the autophosphorylation of the MAP3K7/TAK1 complex (includes TAK1, TAB2, and TAB3). Activation of the MAP3K7/TAK1 complex by autophosphorylation results in the induction and expression of NF-kappa-B and MAPK-responsive inflammatory genes, thereby leading to an innate immune response in the infected cell. Restricts infection by human immunodeficiency virus type 1 (HIV-1), simian immunodeficiency virus (SIV-mac) and N-tropic murine leukemia viruse (N-MLV). Plays a role in regulating autophagy through activation of autophagy regulator BECN1 by causing its dissociation from its inhibitors BCL2 and TAB2. This Chlorocebus tantalus (Tantalus monkey) protein is Tripartite motif-containing protein 5 (TRIM5).